The following is a 293-amino-acid chain: Elongation factor Ts (293 aa).

The segment at 80 to 83 (TDFV) is involved in Mg(2+) ion dislocation from EF-Tu.

The protein belongs to the EF-Ts family.

Its subcellular location is the cytoplasm. Its function is as follows. Associates with the EF-Tu.GDP complex and induces the exchange of GDP to GTP. It remains bound to the aminoacyl-tRNA.EF-Tu.GTP complex up to the GTP hydrolysis stage on the ribosome. The polypeptide is Elongation factor Ts (Enterococcus faecalis (strain ATCC 700802 / V583)).